The following is a 224-amino-acid chain: Large ribosomal subunit protein uL3 (224 aa).

Residue Gln159 is modified to N5-methylglutamine.

Belongs to the universal ribosomal protein uL3 family. As to quaternary structure, part of the 50S ribosomal subunit. Forms a cluster with proteins L14 and L19. In terms of processing, methylated by PrmB.

One of the primary rRNA binding proteins, it binds directly near the 3'-end of the 23S rRNA, where it nucleates assembly of the 50S subunit. In Janthinobacterium sp. (strain Marseille) (Minibacterium massiliensis), this protein is Large ribosomal subunit protein uL3.